We begin with the raw amino-acid sequence, 354 residues long: Arginase-2, mitochondrial (354 aa).

The transit peptide at 1 to 22 directs the protein to the mitochondrion; that stretch reads MFLRSSVSRLLHGQIPCALTRS. Residues H120, D143, H145, and D147 each coordinate Mn(2+). Substrate is bound by residues 145-149, 156-158, and E202; these read HADIN and SGN. Residues D251 and D253 each coordinate Mn(2+). Residues T265 and E296 each contribute to the substrate site.

The protein belongs to the arginase family. As to quaternary structure, homotrimer. Mn(2+) is required as a cofactor.

It is found in the mitochondrion. The catalysed reaction is L-arginine + H2O = urea + L-ornithine. It participates in nitrogen metabolism; urea cycle; L-ornithine and urea from L-arginine: step 1/1. Its function is as follows. May play a role in the regulation of extra-urea cycle arginine metabolism and also in down-regulation of nitric oxide synthesis. Extrahepatic arginase functions to regulate L-arginine bioavailability to nitric oxid synthase (NOS). Arginine metabolism is a critical regulator of innate and adaptive immune responses. Seems to be involved in negative regulation of the survival capacity of activated T cells. May suppress inflammation-related signaling in asthmatic airway epithelium. May play a role in promoting prenatal immune suppression. Regulates RPS6KB1 signaling, which promotes endothelial cell senescence and inflammation and implicates NOS3/eNOS dysfunction. Can inhibit endothelial autophagy independently of its enzymatic activity implicating mTORC2 signaling. Involved in vascular smooth muscle cell senescence and apoptosis independently of its enzymatic activity. This Rattus norvegicus (Rat) protein is Arginase-2, mitochondrial (Arg2).